Here is a 406-residue protein sequence, read N- to C-terminus: Succinylornithine transaminase (406 aa).

Residue Lys252 is modified to N6-(pyridoxal phosphate)lysine.

This sequence belongs to the class-III pyridoxal-phosphate-dependent aminotransferase family. AstC subfamily. Pyridoxal 5'-phosphate serves as cofactor.

It carries out the reaction N(2)-succinyl-L-ornithine + 2-oxoglutarate = N-succinyl-L-glutamate 5-semialdehyde + L-glutamate. It participates in amino-acid degradation; L-arginine degradation via AST pathway; L-glutamate and succinate from L-arginine: step 3/5. Its function is as follows. Catalyzes the transamination of N(2)-succinylornithine and alpha-ketoglutarate into N(2)-succinylglutamate semialdehyde and glutamate. Can also act as an acetylornithine aminotransferase. The sequence is that of Succinylornithine transaminase from Escherichia coli O157:H7.